The following is a 403-amino-acid chain: Alkaline protease 1 (403 aa).

The first 21 residues, 1-21 (MLSIKRTLLLLGAVLPAVFGA), serve as a signal peptide directing secretion. Residues 22-125 (PVQETRRAAQ…QIWYLDALTT (104 aa)) constitute a propeptide that is removed on maturation. The Inhibitor I9 domain maps to 36-120 (KYIVTFKPGT…HVEEDQIWYL (85 aa)). Positions 130 to 403 (PWGLGSISHK…PNKLAYNGNA (274 aa)) constitute a Peptidase S8 domain. Catalysis depends on charge relay system residues aspartate 162 and histidine 193. Asparagine 253 and asparagine 307 each carry an N-linked (GlcNAc...) asparagine glycan. Catalysis depends on serine 349, which acts as the Charge relay system. Asparagine 367 is a glycosylation site (N-linked (GlcNAc...) asparagine).

This sequence belongs to the peptidase S8 family.

Its subcellular location is the secreted. The enzyme catalyses Hydrolysis of proteins with broad specificity, and of Bz-Arg-OEt &gt; Ac-Tyr-OEt. Does not hydrolyze peptide amides.. In terms of biological role, secreted alkaline protease that allows assimilation of proteinaceous substrates. Acts as a significant virulence factor in invasive aspergillosis. Involved in immune evasion from the human and mice complement systems during infection. Efficiently cleaves important components of the complement cascade such as such as C3, C4, C5, and C1q, as well as IgG, which leads to down-regulation of complement activation at the hyphal surface. The polypeptide is Alkaline protease 1 (alp1) (Aspergillus fumigatus (strain CBS 144.89 / FGSC A1163 / CEA10) (Neosartorya fumigata)).